Consider the following 502-residue polypeptide: Lysine--tRNA ligase (502 aa).

Residues E411 and E418 each contribute to the Mg(2+) site.

The protein belongs to the class-II aminoacyl-tRNA synthetase family. In terms of assembly, homodimer. Requires Mg(2+) as cofactor.

It is found in the cytoplasm. It carries out the reaction tRNA(Lys) + L-lysine + ATP = L-lysyl-tRNA(Lys) + AMP + diphosphate. This is Lysine--tRNA ligase from Chromohalobacter salexigens (strain ATCC BAA-138 / DSM 3043 / CIP 106854 / NCIMB 13768 / 1H11).